Here is a 378-residue protein sequence, read N- to C-terminus: UPF0754 membrane protein Exig_0680 (378 aa).

2 consecutive transmembrane segments (helical) span residues 5–25 (VDLV…GAVT) and 357–377 (ITWL…ILLI).

Belongs to the UPF0754 family.

Its subcellular location is the cell membrane. The sequence is that of UPF0754 membrane protein Exig_0680 from Exiguobacterium sibiricum (strain DSM 17290 / CCUG 55495 / CIP 109462 / JCM 13490 / 255-15).